A 446-amino-acid polypeptide reads, in one-letter code: N-succinylarginine dihydrolase (446 aa).

Substrate is bound by residues 19–28 (AGLSFGNVAS), Asn110, and 137–138 (HR). Glu174 is a catalytic residue. Arg213 serves as a coordination point for substrate. The active site involves His249. 2 residues coordinate substrate: Asp251 and Asn364. Residue Cys370 is the Nucleophile of the active site.

The protein belongs to the succinylarginine dihydrolase family. Homodimer.

It catalyses the reaction N(2)-succinyl-L-arginine + 2 H2O + 2 H(+) = N(2)-succinyl-L-ornithine + 2 NH4(+) + CO2. The protein operates within amino-acid degradation; L-arginine degradation via AST pathway; L-glutamate and succinate from L-arginine: step 2/5. Functionally, catalyzes the hydrolysis of N(2)-succinylarginine into N(2)-succinylornithine, ammonia and CO(2). The polypeptide is N-succinylarginine dihydrolase (Burkholderia cenocepacia (strain HI2424)).